Here is a 193-residue protein sequence, read N- to C-terminus: dCTP deaminase (193 aa).

DCTP-binding positions include 110 to 115, D128, 136 to 138, Y171, K178, and Q182; these read RSSLAR and VLE. E138 serves as the catalytic Proton donor/acceptor. Positions 173–193 are disordered; it reads KRKNAKYKDQQDAVASRISQD.

It belongs to the dCTP deaminase family. As to quaternary structure, homotrimer.

It catalyses the reaction dCTP + H2O + H(+) = dUTP + NH4(+). It participates in pyrimidine metabolism; dUMP biosynthesis; dUMP from dCTP (dUTP route): step 1/2. In terms of biological role, catalyzes the deamination of dCTP to dUTP. This chain is dCTP deaminase, found in Shewanella sp. (strain ANA-3).